The primary structure comprises 107 residues: MPKLKVKKGDMVLVIAGKDKDKKGKIVQVLPKENRVVVEGVNIVKRHTRPNPKLPQGGIVEKEAPIHVSNVMVICPSCGKPTRVGKKFLADGKKIRVCKKCGESLDR.

Belongs to the universal ribosomal protein uL24 family. As to quaternary structure, part of the 50S ribosomal subunit.

One of two assembly initiator proteins, it binds directly to the 5'-end of the 23S rRNA, where it nucleates assembly of the 50S subunit. Functionally, one of the proteins that surrounds the polypeptide exit tunnel on the outside of the subunit. The polypeptide is Large ribosomal subunit protein uL24 (Carboxydothermus hydrogenoformans (strain ATCC BAA-161 / DSM 6008 / Z-2901)).